We begin with the raw amino-acid sequence, 489 residues long: CUGBP Elav-like family member 1-B (489 aa).

RRM domains are found at residues 16-99 (IKMF…PADS), 108-188 (RKLF…FADT), and 404-482 (ANLF…LKRS).

Belongs to the CELF/BRUNOL family. Oligomer. Oligomerization is required for RNA-binding and EDEN-dependent deadenylation. Phosphorylated during oocyte maturation and dephosphorylated following egg activation. Dephosphorylation is calcium dependent and correlates with the increase in the activity of EDEN-dependent deadenylation.

It is found in the nucleus. It localises to the cytoplasm. Functionally, RNA-binding protein implicated in the regulation of several post-transcriptional events. May be involved in pre-mRNA alternative splicing, mRNA translation activation and stability. Mediates the rapid and sequence-specific cytoplasmic deadenylation of EDEN-containing maternal mRNAs following fertilization. Binds to AU-rich sequences (AREs) of jun mRNA. Binds to the embryonic deadenylation element (EDEN) motif localized in the 3'-UTR of maternal mRNAs. Binds to RNA containing several repeats of the consensus sequence 5'-UGU-3'. EDEN-dependent deadenylation is enhanced by the presence of an additional cis element composed of three AUU repeats. In Xenopus laevis (African clawed frog), this protein is CUGBP Elav-like family member 1-B (cugbp1-b).